Reading from the N-terminus, the 479-residue chain is Cardiolipin synthase A (479 aa).

The next 2 membrane-spanning stretches (helical) occupy residues 8-28 (FFGY…LHAL) and 38-58 (IAWA…YLIF). 2 PLD phosphodiesterase domains span residues 218–245 (VNFR…GDEY) and 392–419 (QPGF…DNRS). Catalysis depends on residues histidine 223, lysine 225, aspartate 230, histidine 397, lysine 399, and aspartate 404.

It belongs to the phospholipase D family. Cardiolipin synthase subfamily. ClsA sub-subfamily.

It is found in the cell inner membrane. It carries out the reaction 2 a 1,2-diacyl-sn-glycero-3-phospho-(1'-sn-glycerol) = a cardiolipin + glycerol. Its function is as follows. Catalyzes the reversible phosphatidyl group transfer from one phosphatidylglycerol molecule to another to form cardiolipin (CL) (diphosphatidylglycerol) and glycerol. In Pseudomonas putida (strain ATCC 700007 / DSM 6899 / JCM 31910 / BCRC 17059 / LMG 24140 / F1), this protein is Cardiolipin synthase A.